The following is a 640-amino-acid chain: Threonine--tRNA ligase (640 aa).

The 61-residue stretch at 1-61 (MPIITLPNGD…TEDSTLQIIT (61 aa)) folds into the TGS domain. Residues 242–533 (DHRKIGKALD…LIEHYAGFMP (292 aa)) are catalytic. Zn(2+)-binding residues include cysteine 333, histidine 384, and histidine 510.

The protein belongs to the class-II aminoacyl-tRNA synthetase family. In terms of assembly, homodimer. The cofactor is Zn(2+).

The protein localises to the cytoplasm. The enzyme catalyses tRNA(Thr) + L-threonine + ATP = L-threonyl-tRNA(Thr) + AMP + diphosphate + H(+). Catalyzes the attachment of threonine to tRNA(Thr) in a two-step reaction: L-threonine is first activated by ATP to form Thr-AMP and then transferred to the acceptor end of tRNA(Thr). Also edits incorrectly charged L-seryl-tRNA(Thr). This chain is Threonine--tRNA ligase, found in Acinetobacter baumannii (strain AB0057).